We begin with the raw amino-acid sequence, 60 residues long: UPF0434 protein HCH_02705 (60 aa).

The protein belongs to the UPF0434 family.

This is UPF0434 protein HCH_02705 from Hahella chejuensis (strain KCTC 2396).